We begin with the raw amino-acid sequence, 306 residues long: MELKDYYAIMGVKPTDDLKTIKTAYRRLARKYHPDVSKEPDAEAHFKEVAEAWEVLSDEQRRAEYDQMWQHRNDPQFNRQFHHSDGQSFNAEDFDDIFSSIFGQHARQSRQRPAARGHDIEIEVAVFLEETLTEHKRTISYNLPVYNAFGMIEQEIPKTLNVKIPAGVGNGQRIRLKGQGTPGENGGPNGDLWLVIHIAPHPLFDIVGQDLEIVVPVSPWEAALGAKVTVPTLKESILLTIPPGSQAGQRLRVKGKGLVSKKQTGDLYAVLKIVMPPKPDENTAALWQQLADAQSSFDPRKDWGKA.

In terms of domain architecture, J spans 5 to 69 (DYYAIMGVKP…QRRAEYDQMW (65 aa)).

Its subcellular location is the cytoplasm. The protein resides in the nucleoid. DNA-binding protein that preferentially recognizes a curved DNA sequence. It is probably a functional analog of DnaJ; displays overlapping activities with DnaJ, but functions under different conditions, probably acting as a molecular chaperone in an adaptive response to environmental stresses other than heat shock. Lacks autonomous chaperone activity; binds native substrates and targets them for recognition by DnaK. Its activity is inhibited by the binding of CbpM. This is Curved DNA-binding protein from Shigella dysenteriae serotype 1 (strain Sd197).